The primary structure comprises 389 residues: S-adenosylmethionine synthase (389 aa).

His17 serves as a coordination point for ATP. Position 19 (Asp19) interacts with Mg(2+). Glu45 serves as a coordination point for K(+). The L-methionine site is built by Glu58 and Gln101. The tract at residues 101–111 (QSPDISQGVTE) is flexible loop. ATP is bound by residues 168 to 170 (DSK), 234 to 235 (RF), Asp243, 249 to 250 (RK), Ala266, and Lys270. Residue Asp243 coordinates L-methionine. Position 274 (Lys274) interacts with L-methionine.

It belongs to the AdoMet synthase family. Homotetramer; dimer of dimers. It depends on Mg(2+) as a cofactor. Requires K(+) as cofactor.

Its subcellular location is the cytoplasm. The catalysed reaction is L-methionine + ATP + H2O = S-adenosyl-L-methionine + phosphate + diphosphate. Its pathway is amino-acid biosynthesis; S-adenosyl-L-methionine biosynthesis; S-adenosyl-L-methionine from L-methionine: step 1/1. In terms of biological role, catalyzes the formation of S-adenosylmethionine (AdoMet) from methionine and ATP. The overall synthetic reaction is composed of two sequential steps, AdoMet formation and the subsequent tripolyphosphate hydrolysis which occurs prior to release of AdoMet from the enzyme. The polypeptide is S-adenosylmethionine synthase (Geobacter metallireducens (strain ATCC 53774 / DSM 7210 / GS-15)).